The chain runs to 358 residues: Septin-12 (358 aa).

Residues 1-25 (MDPLRRSPSPCLSSQPSSPSTPPCE) form a disordered region. Over residues 6–18 (RSPSPCLSSQPSS) the composition is skewed to low complexity. The Septin-type G domain maps to 46-317 (MGFEFNIMVV…ENYRVIRLNE (272 aa)). Residues 46–319 (MGFEFNIMVV…YRVIRLNESH (274 aa)) are interaction with SEPTIN7. The interval 56–63 (GQSGLGKS) is G1 motif. Residues 56–63 (GQSGLGKS), threonine 89, glycine 115, 195–203 (RADSLTMEE), glycine 251, and arginine 266 each bind GTP. The segment at 112-115 (DTPG) is G3 motif. Residues 194–197 (ARAD) form a G4 motif region. Positions 258-358 (VNGRCVLGRK…GAHDDSDDEF (101 aa)) are self-association (via N-terminus) to polymerize octameric septin 12-7-6-2/4-2/4-6-7-12 filaments.

Belongs to the TRAFAC class TrmE-Era-EngA-EngB-Septin-like GTPase superfamily. Septin GTPase family. Septins polymerize into heterooligomeric protein complexes that form filaments, and can associate with cellular membranes, actin filaments and microtubules. GTPase activity is required for filament formation. Interacts with SEPTIN6 and SEPTIN11. Self-associates. Component of a septin core octameric complex consisting of SEPTIN12, SEPTIN7, SEPTIN6 and SEPTIN2 or SEPTIN4 in the order 12-7-6-2-2-6-7-12 or 12-7-6-4-4-6-7-12 and located in the sperm annulus; the octamer polymerizes into filaments via the SEPTIN12 N- and C-termini; the SEPTIN12:SEPTIN7 association is mediated by the respective GTP-binding domains. Interacts with SPAG4 and LMNB1. Associates with alpha- and beta-tubulins. Widely expressed. Expressed in lymph node.

The protein resides in the cytoplasm. It localises to the cytoskeleton. The protein localises to the spindle. It is found in the nucleus. Its subcellular location is the cell projection. The protein resides in the cilium. It localises to the flagellum. Filament-forming cytoskeletal GTPase. Involved in spermatogenesis. Involved in the morphogenesis of sperm heads and the elongation of sperm tails probably implicating the association with alpha- and beta-tubulins. Forms a filamentous structure with SEPTIN7, SEPTIN6, SEPTIN2 and probably SEPTIN4 at the sperm annulus which is required for the structural integrity and motility of the sperm tail during postmeiotic differentiation. May play a role in cytokinesis (Potential). This chain is Septin-12, found in Homo sapiens (Human).